The chain runs to 148 residues: Large ribosomal subunit protein uL15A (148 aa).

Composition is skewed to basic residues over residues 1–13 (MPTHVSKTRKLRG) and 21–31 (RIGKHRKHPGG). The disordered stretch occupies residues 1–36 (MPTHVSKTRKLRGHVSAGHGRIGKHRKHPGGRGKAG).

The protein belongs to the universal ribosomal protein uL15 family. As to quaternary structure, component of the large ribosomal subunit (LSU). Mature yeast ribosomes consist of a small (40S) and a large (60S) subunit. The 40S small subunit contains 1 molecule of ribosomal RNA (18S rRNA) and at least 33 different proteins. The large 60S subunit contains 3 rRNA molecules (25S, 5.8S and 5S rRNA) and at least 46 different proteins.

The protein resides in the cytoplasm. Component of the ribosome, a large ribonucleoprotein complex responsible for the synthesis of proteins in the cell. The small ribosomal subunit (SSU) binds messenger RNAs (mRNAs) and translates the encoded message by selecting cognate aminoacyl-transfer RNA (tRNA) molecules. The large subunit (LSU) contains the ribosomal catalytic site termed the peptidyl transferase center (PTC), which catalyzes the formation of peptide bonds, thereby polymerizing the amino acids delivered by tRNAs into a polypeptide chain. The nascent polypeptides leave the ribosome through a tunnel in the LSU and interact with protein factors that function in enzymatic processing, targeting, and the membrane insertion of nascent chains at the exit of the ribosomal tunnel. In Schizosaccharomyces pombe (strain 972 / ATCC 24843) (Fission yeast), this protein is Large ribosomal subunit protein uL15A (rpl2802).